The chain runs to 333 residues: Tetraacyldisaccharide 4'-kinase (333 aa).

60 to 67 (TVGGTGKT) contacts ATP.

This sequence belongs to the LpxK family.

The catalysed reaction is a lipid A disaccharide + ATP = a lipid IVA + ADP + H(+). It functions in the pathway glycolipid biosynthesis; lipid IV(A) biosynthesis; lipid IV(A) from (3R)-3-hydroxytetradecanoyl-[acyl-carrier-protein] and UDP-N-acetyl-alpha-D-glucosamine: step 6/6. Functionally, transfers the gamma-phosphate of ATP to the 4'-position of a tetraacyldisaccharide 1-phosphate intermediate (termed DS-1-P) to form tetraacyldisaccharide 1,4'-bis-phosphate (lipid IVA). This Ectopseudomonas mendocina (strain ymp) (Pseudomonas mendocina) protein is Tetraacyldisaccharide 4'-kinase.